The primary structure comprises 160 residues: SsrA-binding protein (160 aa).

This sequence belongs to the SmpB family.

Its subcellular location is the cytoplasm. Functionally, required for rescue of stalled ribosomes mediated by trans-translation. Binds to transfer-messenger RNA (tmRNA), required for stable association of tmRNA with ribosomes. tmRNA and SmpB together mimic tRNA shape, replacing the anticodon stem-loop with SmpB. tmRNA is encoded by the ssrA gene; the 2 termini fold to resemble tRNA(Ala) and it encodes a 'tag peptide', a short internal open reading frame. During trans-translation Ala-aminoacylated tmRNA acts like a tRNA, entering the A-site of stalled ribosomes, displacing the stalled mRNA. The ribosome then switches to translate the ORF on the tmRNA; the nascent peptide is terminated with the 'tag peptide' encoded by the tmRNA and targeted for degradation. The ribosome is freed to recommence translation, which seems to be the essential function of trans-translation. The chain is SsrA-binding protein from Nocardia farcinica (strain IFM 10152).